The chain runs to 1357 residues: DNA-directed RNA polymerase subunit beta (1357 aa).

The protein belongs to the RNA polymerase beta chain family. In terms of assembly, the RNAP catalytic core consists of 2 alpha, 1 beta, 1 beta' and 1 omega subunit. When a sigma factor is associated with the core the holoenzyme is formed, which can initiate transcription.

The enzyme catalyses RNA(n) + a ribonucleoside 5'-triphosphate = RNA(n+1) + diphosphate. DNA-dependent RNA polymerase catalyzes the transcription of DNA into RNA using the four ribonucleoside triphosphates as substrates. This chain is DNA-directed RNA polymerase subunit beta, found in Pseudomonas savastanoi pv. phaseolicola (strain 1448A / Race 6) (Pseudomonas syringae pv. phaseolicola (strain 1448A / Race 6)).